The sequence spans 1663 residues: Kotanin synthase (1663 aa).

Positions arginine 19–histidine 168 are N-terminal acylcarrier protein transacylase domain (SAT). One can recognise a Ketosynthase family 3 (KS3) domain in the interval aspartate 301 to glutamate 731. Active-site for beta-ketoacyl synthase activity residues include cysteine 474, histidine 609, and histidine 650. The malonyl-CoA:ACP transacylase (MAT) domain stretch occupies residues phenylalanine 830–valine 1149. Residues threonine 1209–aspartate 1527 are product template (PT) domain. Residues histidine 1213–serine 1349 form an N-terminal hotdog fold region. One can recognise a PKS/mFAS DH domain in the interval histidine 1213 to asparagine 1523. Histidine 1245 (proton acceptor; for dehydratase activity) is an active-site residue. The tract at residues glutamine 1376 to asparagine 1523 is C-terminal hotdog fold. Aspartate 1434 functions as the Proton donor; for dehydratase activity in the catalytic mechanism. The segment at aspartate 1544 to valine 1580 is disordered. The Carrier domain occupies lysine 1586–tryptophan 1663. An O-(pantetheine 4'-phosphoryl)serine modification is found at serine 1623.

Pantetheine 4'-phosphate serves as cofactor.

It participates in secondary metabolite biosynthesis. Non-reducing polyketide synthase; part of the gene cluster that mediates the biosynthesis of the bicoumarin kotanin. The non-reducing polyketide synthase ktnS first catalyzes the formation of the pentaketidic 4,7-dihydroxy-5-methylcoumarin from acetyl coenzyme A and 4 malonyl coenzyme A molecules. Further O-methylation by ktnB leads to the formation of 7-demethylsiderin. Then, an oxidative phenol coupling catalyzed by the cytochrome P450 monooxygenase ktnC forms the 8,8'-dimer P-orlandin via dimerization the monomeric precursor, 7-demethylsiderin. P-orlandin is subsequently O-methylated in a stepwise fashion to demethylkotanin and kotanin. In Aspergillus niger (strain ATCC MYA-4892 / CBS 513.88 / FGSC A1513), this protein is Kotanin synthase.